Here is a 639-residue protein sequence, read N- to C-terminus: Nitrous-oxide reductase (639 aa).

Residues 1–54 (MSDKKDQVPGAVEAPRGVSRRSFLGTGAVTGAVLAGATALGAGTFTRESWAAAA) constitute a signal peptide (tat-type signal). Residues His-130, His-131, and His-179 each coordinate Cu cation. Ca(2+)-binding residues include Tyr-257, Glu-260, Met-268, Asp-274, and Asn-325. Residues His-327, His-383, and His-434 each contribute to the Cu cation site. Residues Lys-455 and Glu-470 each contribute to the Ca(2+) site. Cu cation is bound by residues His-495, His-584, Cys-619, Trp-621, Cys-623, His-627, and Met-630. The tract at residues 543–639 (NKVRVYMTSM…MVGRMLVEKA (97 aa)) is COX2-like.

It belongs to the NosZ family. In the C-terminal section; belongs to the cytochrome c oxidase subunit 2 family. As to quaternary structure, homodimer. Requires Ca(2+) as cofactor. The cofactor is Cu cation. In terms of processing, predicted to be exported by the Tat system. The position of the signal peptide cleavage has not been experimentally proven.

It is found in the periplasm. It carries out the reaction N2 + 2 Fe(III)-[cytochrome c] + H2O = nitrous oxide + 2 Fe(II)-[cytochrome c] + 2 H(+). It participates in nitrogen metabolism; nitrate reduction (denitrification); dinitrogen from nitrate: step 4/4. In terms of biological role, nitrous-oxide reductase is part of a bacterial respiratory system which is activated under anaerobic conditions in the presence of nitrate or nitrous oxide. This Pseudomonas fluorescens protein is Nitrous-oxide reductase (nosZ).